The sequence spans 589 residues: Protein kinase G11A (589 aa).

Positions 1-167 (MASKAMPRAP…SACSSISSVT (167 aa)) are disordered. 2 stretches are compositionally biased toward polar residues: residues 15–36 (NLQSLKLCSQNDSSLETTSPSK) and 63–76 (TQHQNESIDLTGSN). Basic and acidic residues predominate over residues 91–100 (RLADEEKGVV). Over residues 142 to 165 (SSSRCRPSTSSDVSDESACSSISS) the composition is skewed to low complexity. In terms of domain architecture, Protein kinase spans 195–533 (FKLLKKLGCG…ATEIKQHPFF (339 aa)). Residues 201 to 209 (LGCGDIGSV) and Lys224 each bind ATP. The active-site Proton acceptor is Asp320. The interval 551–589 (RPVEIERPPKQPVSTSEPAAAPSDAAQKSSDSYLEFDFF) is disordered.

This sequence belongs to the protein kinase superfamily. Ser/Thr protein kinase family.

It carries out the reaction L-seryl-[protein] + ATP = O-phospho-L-seryl-[protein] + ADP + H(+). The enzyme catalyses L-threonyl-[protein] + ATP = O-phospho-L-threonyl-[protein] + ADP + H(+). Its function is as follows. May play a role in the regulation of metabolism and signal transduction processes. This is Protein kinase G11A from Oryza sativa subsp. japonica (Rice).